Here is a 693-residue protein sequence, read N- to C-terminus: MFYSHTLLARKGPLGTVWCAAHVHQRLKKSQYTSINIPDTVDNIMFPEVPLALRTSSHLLVGVVRIYSKKVDYLYNDWNLLNTWVAKAFVSTQVNLPEDARQAPPESVTLPQALNLDEFDLEDDTLDMEFDNHTRSEEDITLTDQIPTGIDPYVAVTFDEDIISESIPMDVDQSTEPVSRHTGEIDVETAHETGPDNEPRDSNIAFDTGTYSPRNVTEEFTEVQDPRQSNLTEERIPNSERNDATSPGTVPEIERMRDAAHDLSPTSHPSFAAQQQDVRVERTESLDETLNEKEPTIPSIDEEMLNSGRHSAFELRSGSPGSAAGSEEERADFVHPSPQLVLQPSPPPQPQRRARKRKNFDGVTVLTNKNISERLKDPSDTLRKRKKMPSSKLKFWRMNNQSRKDQNFNEPLFTGFSDDLRNVFEKDYVASKPHLAVSDETLPEPASVSPTREAEVEINPVSPIPDSTNPDSTVQLSPAQQTEDVLDSAGPRPAHAESVATEAQSPRTFDNDDMGIEHLRDGGFPVYMPSPPPRSSPFRTDDFTTQSGNWETESYRTEPSTSTVPEDLPGQRNLGLSPVSERTDEELYFLEVGGNSPVGTPASQDSAALTGRARALAQYLKQRSSSSPTTSSHPSGDLSLSEILAGKTRKLAARMFFETLVLKSRGLIDMQQDRPYGDIALKLMPALFSKVQT.

Disordered regions lie at residues Ile-167 to Val-250, Asp-262 to Asp-361, Pro-460 to Asn-511, and Thr-545 to Asn-573. Composition is skewed to basic and acidic residues over residues Val-178–Asp-201 and Thr-232–Asp-243. Polar residues predominate over residues Ser-264–Asp-277. Residues Val-278–Pro-295 are compositionally biased toward basic and acidic residues. Residues Arg-316–Gly-325 are compositionally biased toward low complexity. Polar residues-rich tracts occupy residues Pro-465–Glu-483 and Thr-545–Val-564.

Belongs to the rad21 family. Component of the cohesin complex. As to expression, low expression in shoots, buds, siliques, leaves and roots. Found in, but not limited to, actively dividing cells: in procambium, protoderm and ground meristem in roots, and in shoot and floral meristems.

The protein localises to the nucleus. May be involved in sister chromatid cohesion during mitosis. This Arabidopsis thaliana (Mouse-ear cress) protein is Sister chromatid cohesion 1 protein 3 (SYN3).